Here is a 279-residue protein sequence, read N- to C-terminus: Movement protein (279 aa).

The protein belongs to the cucumovirus movement protein family.

The protein resides in the host cell junction. Its subcellular location is the host plasmodesma. Functionally, transports viral genome to neighboring plant cells directly through plasmosdesmata, without any budding. The movement protein allows efficient cell to cell propagation, by bypassing the host cell wall barrier. Acts by forming a tubular structure at the host plasmodesmata, enlarging it enough to allow free passage of virion capsids. The sequence is that of Movement protein from Cucumber mosaic virus (strain Ixora) (CMV).